Consider the following 467-residue polypeptide: UDP-N-acetylmuramate--L-alanine ligase (467 aa).

An ATP-binding site is contributed by 114–120 (GTHGKTT).

Belongs to the MurCDEF family.

The protein localises to the cytoplasm. It catalyses the reaction UDP-N-acetyl-alpha-D-muramate + L-alanine + ATP = UDP-N-acetyl-alpha-D-muramoyl-L-alanine + ADP + phosphate + H(+). It functions in the pathway cell wall biogenesis; peptidoglycan biosynthesis. Functionally, cell wall formation. This chain is UDP-N-acetylmuramate--L-alanine ligase, found in Rhodopseudomonas palustris (strain ATCC BAA-98 / CGA009).